Here is a 174-residue protein sequence, read N- to C-terminus: Co-chaperone protein HscB homolog (174 aa).

Residues 2 to 74 (NYFDLFNVVP…LRRAEHMLSL (73 aa)) form the J domain.

The protein belongs to the HscB family. In terms of assembly, interacts with HscA and stimulates its ATPase activity.

In terms of biological role, co-chaperone involved in the maturation of iron-sulfur cluster-containing proteins. Seems to help targeting proteins to be folded toward HscA. This Shewanella frigidimarina (strain NCIMB 400) protein is Co-chaperone protein HscB homolog.